A 616-amino-acid polypeptide reads, in one-letter code: MSKNNKKWRNAGLYALLLIVVLALASAFFDRPTQTRETLSYSDFVNRVEANQIERVNLSADRTQAQVPNPSGGPPYLVNLPNDPDLINILTQHNVDIAVQPQSDEGFWFRIASTLFLPILLLVGIFFLFRRAQSGPGSQAMNFGKSKARVQMEPQTQVTFGDVAGIEQAKLELTEVVDFLKNADRFTELGAKIPKGVLLVGPPGTGKTLLAKAVAGEAGVPFFSISGSEFVEMFVGVGASRVRDLFEQAKANAPCIVFIDEIDAVGRQRGAGLGGGNDEREQTLNQLLTEMDGFEGNTGIIIVAATNRPDVLDSALMRPGRFDRQVVVDRPDYAGRREILNVHARGKTLSQDVDLDKIARRTPGFTGADLSNLLNEAAILAARRNLTEISMDEVNDAIDRVLAGPEKKNRVMSEKRKTLVAYHEAGHALVGALMPDYDPVQKISIIPRGRAGGLTWFTPSEDRMESGLYSRSYLQNQMAVALGGRIAEEIIFGEEEVTTGASNDLQQVARVARQMVTRFGMSDRLGPVALGRQGGGVFLGRDIASDRDFSDETAAAIDEEVSQLVDQAYQRAKQVLVENRGILDQLAEILVEKETVDSEELQTLLANNNAKLALLV.

Residues 1–9 (MSKNNKKWR) are Cytoplasmic-facing. Residues 10 to 30 (NAGLYALLLIVVLALASAFFD) form a helical membrane-spanning segment. At 31–108 (RPTQTRETLS…VQPQSDEGFW (78 aa)) the chain is on the lumenal side. The chain crosses the membrane as a helical span at residues 109–129 (FRIASTLFLPILLLVGIFFLF). Topologically, residues 130–616 (RRAQSGPGSQ…NNNAKLALLV (487 aa)) are cytoplasmic. 201-208 (GPPGTGKT) contacts ATP. Position 423 (His423) interacts with Zn(2+). Residue Glu424 is part of the active site. Zn(2+)-binding residues include His427 and Asp504.

It in the central section; belongs to the AAA ATPase family. This sequence in the C-terminal section; belongs to the peptidase M41 family. Homohexamer (Potential). Part of a large complex that includes FtsH2 and PSII. Coimmunoprecipitates with YidC. Requires Zn(2+) as cofactor.

It is found in the cellular thylakoid membrane. Functionally, acts as a processive, ATP-dependent zinc metallopeptidase for both cytoplasmic and membrane proteins. Plays a role in the quality control of integral membrane proteins. This is ATP-dependent zinc metalloprotease FtsH 3 from Synechocystis sp. (strain ATCC 27184 / PCC 6803 / Kazusa).